We begin with the raw amino-acid sequence, 237 residues long: Dihydroceramide fatty acyl 2-hydroxylase FAH2 (237 aa).

The next 2 helical transmembrane spans lie at 54–74 and 77–97; these read VWWAIPTIWLPVVCYVLSISA and GLTFPQIGLIVAFGVLTWTLL. Residues histidine 102, histidine 107, histidine 123, histidine 126, and histidine 127 each contribute to the Zn(2+) site. 2 helical membrane passes run 134–154 and 156–176; these read LRLVFPPTATAILLVPLWKLL and LLATPATAPAILGGILFGYVM. Histidine 181, histidine 185, histidine 201, histidine 204, and histidine 205 together coordinate Zn(2+).

This sequence belongs to the sterol desaturase family. In terms of assembly, interacts with CYTB5-A, CYTB5-B, CYTB5-C and CYTB5-D. The cofactor is Zn(2+). As to expression, expressed in leaves, roots, flowers and seeds.

It is found in the endoplasmic reticulum membrane. The enzyme catalyses an N-(1,2-saturated acyl)sphinganine + 2 Fe(II)-[cytochrome b5] + O2 + 2 H(+) = an N-[(2'R)-hydroxyacyl]sphinganine + 2 Fe(III)-[cytochrome b5] + H2O. Its function is as follows. Fatty acid 2-hydroxylase involved in the alpha-hydroxylation of the long-chain fatty acid (LCFA) palmitic acid. Probably involved in the resistance response to oxidative stress. This is Dihydroceramide fatty acyl 2-hydroxylase FAH2 from Arabidopsis thaliana (Mouse-ear cress).